A 431-amino-acid chain; its full sequence is Transmembrane protease serine 11C (431 aa).

Over 1 to 33 (MARGQPRRSEEQWTALQNRTECKTKIKLTRCGK) the chain is Cytoplasmic. Residues 34–54 (ITLGILTAVLAAVLIGLIAYF) traverse the membrane as a helical; Signal-anchor for type II membrane protein segment. Topologically, residues 55 to 431 (AACGKDSFYY…RDWITSKTGL (377 aa)) are extracellular. The SEA domain maps to 60 to 177 (DSFYYHVSFK…SSFKFSDIAM (118 aa)). N-linked (GlcNAc...) asparagine glycosylation is present at N99. In terms of domain architecture, Peptidase S1 spans 200 to 430 (VAGGQDAEEG…YRDWITSKTG (231 aa)). C225 and C241 are joined by a disulfide. H240 acts as the Charge relay system in catalysis. The N-linked (GlcNAc...) asparagine glycan is linked to N276. D285 acts as the Charge relay system in catalysis. A glycan (N-linked (GlcNAc...) asparagine) is linked at N347. 2 disulfides stabilise this stretch: C350–C366 and C377–C406. S381 (charge relay system) is an active-site residue.

This sequence belongs to the peptidase S1 family. Proteolytically cleaved via an autocatalytic mechanism. Expressed specifically in Purkinje neurons of the cerebellum (at protein level). Also detected in spinal cord.

The protein localises to the cell membrane. Its subcellular location is the cell projection. The protein resides in the dendrite. It localises to the perikaryon. In terms of biological role, serine protease which has a preference for Arg or Lys in position P1 and uncharged residues in positions P2 and P3. Shows specificity towards FGF2 in vitro. This chain is Transmembrane protease serine 11C, found in Mus musculus (Mouse).